The chain runs to 130 residues: Small ribosomal subunit protein uS9 (130 aa).

Belongs to the universal ribosomal protein uS9 family.

The chain is Small ribosomal subunit protein uS9 from Delftia acidovorans (strain DSM 14801 / SPH-1).